The chain runs to 240 residues: MTESHDTPITSDGEARPHRRIKSFVMRAGRMTEGQQRGLDQGGPLYILPLADSPVDYDQVFGRSAPRTLEIGFGMGHSLLEMAAAAPEQDFIGVEVHRPGVGALLNGVLTQGLKNLRVYDCDAIEVLNRCVADNSLDRLMLFFPDPWHKARHHKRRIVQLEFAELVRRKLKPGGVFHMATDWEPYAEYMLEVMSAAPGYRNRAADGTYVPRPEERPITKFERRGERLGHGVWDLKFEKVD.

Residues 1–20 (MTESHDTPITSDGEARPHRR) are disordered. 4 residues coordinate S-adenosyl-L-methionine: E70, E95, D122, and D145. D145 is an active-site residue. Substrate-binding positions include K149, D181, and 218–221 (TKFE).

Belongs to the class I-like SAM-binding methyltransferase superfamily. TrmB family.

It catalyses the reaction guanosine(46) in tRNA + S-adenosyl-L-methionine = N(7)-methylguanosine(46) in tRNA + S-adenosyl-L-homocysteine. It functions in the pathway tRNA modification; N(7)-methylguanine-tRNA biosynthesis. Functionally, catalyzes the formation of N(7)-methylguanine at position 46 (m7G46) in tRNA. The sequence is that of tRNA (guanine-N(7)-)-methyltransferase from Pseudomonas putida (strain ATCC 700007 / DSM 6899 / JCM 31910 / BCRC 17059 / LMG 24140 / F1).